A 345-amino-acid chain; its full sequence is Solute carrier family 25 member 43 (345 aa).

3 Solcar repeats span residues 11–100, 104–195, and 199–297; these read TSSQ…IDEL, SQWR…QERH, and TSLQ…LYRN. The next 6 helical transmembrane spans lie at 16–36, 67–87, 109–129, 165–185, 204–224, and 261–281; these read LMCVGFAGIFSKTVTSPLEVV, FWKGNMVSCLRLFPYSAIHLA, IVAGGLAGISAALATYPLEVV, GFSLTVLGAVPFSVGCYAVYI, FINGCLAAGVAQTLSFPFETV, and VMALWSGLTANMVKIVPYFGL.

The protein belongs to the mitochondrial carrier (TC 2.A.29) family.

It localises to the mitochondrion inner membrane. The sequence is that of Solute carrier family 25 member 43 (slc25a43) from Danio rerio (Zebrafish).